The primary structure comprises 845 residues: Protein TSD2 (845 aa).

A disordered region spans residues 193–283; the sequence is DVDSDSESDS…SASATRLTNA (91 aa). Basic and acidic residues-rich tracts occupy residues 202–212 and 230–242; these read SDSHSDSHSDS and ARSH…DGSG. The span at 243 to 272 shows a compositional bias: basic residues; that stretch reads GKRKRGSHSPLSRRRQRHKQGQRHKPRHRS.

It belongs to the CDC45 family.

It is found in the nucleus. Temperature-sensitive protein required for DNA synthesis. May be a transcription factor that regulates the level or influences the stability of DNA polymerases or auxiliary proteins. This Mycosarcoma maydis (Corn smut fungus) protein is Protein TSD2 (TSD2).